Here is a 200-residue protein sequence, read N- to C-terminus: Potassium-transporting ATPase KdpC subunit (200 aa).

Residues 6–26 (PAVVLLILLTLITGIAYPLLT) form a helical membrane-spanning segment.

This sequence belongs to the KdpC family. In terms of assembly, the system is composed of three essential subunits: KdpA, KdpB and KdpC.

It is found in the cell inner membrane. Part of the high-affinity ATP-driven potassium transport (or Kdp) system, which catalyzes the hydrolysis of ATP coupled with the electrogenic transport of potassium into the cytoplasm. This subunit acts as a catalytic chaperone that increases the ATP-binding affinity of the ATP-hydrolyzing subunit KdpB by the formation of a transient KdpB/KdpC/ATP ternary complex. In Yersinia enterocolitica serotype O:8 / biotype 1B (strain NCTC 13174 / 8081), this protein is Potassium-transporting ATPase KdpC subunit.